A 297-amino-acid polypeptide reads, in one-letter code: MLNVTHQLKKKLFLSDLDEKSSSSPHDEKKPGDGREVREEKSKRKALPALPSPAEEKSMNLSIARQRSPSGSSPEQVKAYGPFFLEYTLMAEYNQLRSQRLPGVYVLPAAKSALVWYGVIFIRMGLYQDGIFKFQMTIPENFPDGDCPTLVFKPTIFHPVVNIETGELDVRRAFPRWRRNINHLWQVLLYAKRIFYKIDSRDPLNPEAAEMYQNDKDRYKQKVNECLRRCHNELHLAVADDPHAIKFVELTPEKQDDVKNQIIESQSKPECLPTANAHKSGLSWMKKGGAIFSKEES.

The segment at 13 to 75 (FLSDLDEKSS…QRSPSGSSPE (63 aa)) is disordered. Positions 17–42 (LDEKSSSSPHDEKKPGDGREVREEKS) are enriched in basic and acidic residues. A compositionally biased stretch (polar residues) spans 59 to 75 (MNLSIARQRSPSGSSPE). A UBC core domain is found at 84–232 (FLEYTLMAEY…VNECLRRCHN (149 aa)).

It belongs to the ubiquitin-conjugating enzyme family. FTS subfamily.

This is Protein AKTIP homolog from Nematostella vectensis (Starlet sea anemone).